The primary structure comprises 37 residues: Large ribosomal subunit protein bL36c (37 aa).

This sequence belongs to the bacterial ribosomal protein bL36 family.

The protein localises to the plastid. It localises to the chloroplast. This is Large ribosomal subunit protein bL36c (rpl36) from Nephroselmis olivacea (Green alga).